The following is a 243-amino-acid chain: UPF0502 protein Rmet_3697 (243 aa).

A compositionally biased stretch (low complexity) spans 1 to 11 (MTDTPDTPDTP). The interval 1–23 (MTDTPDTPDTPMATGASSRPPLR) is disordered.

It belongs to the UPF0502 family.

The protein is UPF0502 protein Rmet_3697 of Cupriavidus metallidurans (strain ATCC 43123 / DSM 2839 / NBRC 102507 / CH34) (Ralstonia metallidurans).